Consider the following 210-residue polypeptide: Imidazoleglycerol-phosphate dehydratase (210 aa).

The protein belongs to the imidazoleglycerol-phosphate dehydratase family.

Its subcellular location is the cytoplasm. The enzyme catalyses D-erythro-1-(imidazol-4-yl)glycerol 3-phosphate = 3-(imidazol-4-yl)-2-oxopropyl phosphate + H2O. It participates in amino-acid biosynthesis; L-histidine biosynthesis; L-histidine from 5-phospho-alpha-D-ribose 1-diphosphate: step 6/9. This is Imidazoleglycerol-phosphate dehydratase from Mycobacterium leprae (strain Br4923).